A 482-amino-acid polypeptide reads, in one-letter code: Islet cell autoantigen 1-like protein (482 aa).

The 204-residue stretch at 44–247 (ASDAELDAKL…TARMMSQIHE (204 aa)) folds into the AH domain. Disordered stretches follow at residues 365–393 (TQEC…PLAH) and 427–449 (SHTD…PNNG). 2 stretches are compositionally biased toward polar residues: residues 366–385 (QECQ…QEPS) and 428–449 (HTDN…PNNG).

This Homo sapiens (Human) protein is Islet cell autoantigen 1-like protein (ICA1L).